An 87-amino-acid polypeptide reads, in one-letter code: Putative regulatory protein syc0519_c (87 aa).

This sequence belongs to the RemA family.

The sequence is that of Putative regulatory protein syc0519_c from Synechococcus sp. (strain ATCC 27144 / PCC 6301 / SAUG 1402/1) (Anacystis nidulans).